The primary structure comprises 688 residues: Soluble guanylate cyclase gcy-35 (688 aa).

His105 serves as a coordination point for heme. The stretch at 358-401 (LNQSRMSQVELNRTLEETTKKLKKMAQELEIEKQKTDELLCELM) forms a coiled coil. A Guanylate cyclase domain is found at 424 to 552 (TLLFTDIVTF…DTVNVANKME (129 aa)). Mg(2+) is bound by residues Asp429 and Asp473. The segment at 644 to 688 (VENGNSAQNNHNNNNNTHHSGRKLMNGSSVDPGSHHIRSPTCTIS) is disordered. The segment covering 646–659 (NGNSAQNNHNNNNN) has biased composition (low complexity).

This sequence belongs to the adenylyl cyclase class-4/guanylyl cyclase family. As to quaternary structure, heterodimer; heterodimerizes with gcy-36, and possibly with other soluble guanylate cyclases. Heme is required as a cofactor. In terms of tissue distribution, expressed in URX, AQR and PQR neurons. Also expressed in ALN, SDQ and BDU neurons, and variably in AVM, PLM and PLN neurons, pharyngeal and body wall muscles, and the excretory cell.

It is found in the cytoplasm. The protein resides in the cell projection. The protein localises to the dendrite. The catalysed reaction is GTP = 3',5'-cyclic GMP + diphosphate. Its activity is regulated as follows. Regulated by molecular oxygen, which binds to the heme binding site. Probably not activated by nitric oxide (NO). Functionally, plays a central role in social feeding behavior and oxygen sensation by synthesizing 3',5'-cyclic guanosine monophosphate (cGMP) from GTP. Oxygen, which binds to its heme-binding sites, probably regulates social behavior by modulating its activity. cGMP is a common second messenger in sensory transduction and is implicated in oxygen sensation. Indeed, C.elegans exhibits a strong behavioral preference for 5-12% oxygen, avoiding higher and lower oxygen levels; a higher level of oxygen inducing a naturally polymorphic social feeding behavior. Involved in avoidance of hyperoxia and for oxygen-induced aggregation and bordering, probably by mediating oxygen-sensing in URX, AQR and PQR sensory neurons. In Caenorhabditis elegans, this protein is Soluble guanylate cyclase gcy-35 (gcy-35).